We begin with the raw amino-acid sequence, 268 residues long: MAVFADLDLRAGSDLKALRGLVETAAHLGYSVVAINHIVDFKEKKQEIEKPVAVSELFTTLPIVQGKSRPIKILTRLTIIVSDPSHCNVLRATSSRARLYDVVAVFPKTEKLFHIACTHLDVDLVCITVTEKLPFYFKRPPINVAIDRGLAFELVYSPAIKDSTMRRYTISSALNLMQICKGKNVIISSAAERPLEIRGPYDVANLGLLFGLSESDAKAAVSTNCRAALLHGETRKTAFGIISTVKKPRPSEGDEDCLPASKKAKCEG.

At Ala2 the chain carries N-acetylalanine. Positions 247-268 are disordered; that stretch reads KPRPSEGDEDCLPASKKAKCEG. A Phosphoserine modification is found at Ser251.

Belongs to the eukaryotic/archaeal RNase P protein component 3 family. As to quaternary structure, component of nuclear RNase P and RNase MRP ribonucleoproteins. RNase P consists of a catalytic RNA moiety and about 10 protein subunits; POP1, POP4, POP5, POP7, RPP14, RPP21, RPP25, RPP30, RPP38 and RPP40. Within the RNase P complex, POP1, POP7 and RPP25 form the 'finger' subcomplex, POP5, RPP14, RPP40 and homodimeric RPP30 form the 'palm' subcomplex, and RPP21, POP4 and RPP38 form the 'wrist' subcomplex. All subunits of the RNase P complex interact with the catalytic RNA. Several subunits of RNase P are also part of the RNase MRP complex. RNase MRP consists of a catalytic RNA moiety and about 8 protein subunits; POP1, POP7, RPP25, RPP30, RPP38, RPP40 and possibly also POP4 and POP5.

It localises to the nucleus. Its subcellular location is the nucleolus. Component of ribonuclease P, a ribonucleoprotein complex that generates mature tRNA molecules by cleaving their 5'-ends. Also a component of the MRP ribonuclease complex, which cleaves pre-rRNA sequences. In Homo sapiens (Human), this protein is Ribonuclease P protein subunit p30 (RPP30).